Reading from the N-terminus, the 125-residue chain is Small ribosomal subunit protein uS13 (125 aa).

The protein belongs to the universal ribosomal protein uS13 family. Part of the 30S ribosomal subunit. Forms a loose heterodimer with protein S19. Forms two bridges to the 50S subunit in the 70S ribosome.

Functionally, located at the top of the head of the 30S subunit, it contacts several helices of the 16S rRNA. In the 70S ribosome it contacts the 23S rRNA (bridge B1a) and protein L5 of the 50S subunit (bridge B1b), connecting the 2 subunits; these bridges are implicated in subunit movement. Contacts the tRNAs in the A and P-sites. This chain is Small ribosomal subunit protein uS13, found in Orientia tsutsugamushi (strain Ikeda) (Rickettsia tsutsugamushi).